Reading from the N-terminus, the 372-residue chain is DNA replication and repair protein RecF (372 aa).

30–37 is an ATP binding site; the sequence is GENAQGKT.

The protein belongs to the RecF family.

It is found in the cytoplasm. In terms of biological role, the RecF protein is involved in DNA metabolism; it is required for DNA replication and normal SOS inducibility. RecF binds preferentially to single-stranded, linear DNA. It also seems to bind ATP. This chain is DNA replication and repair protein RecF, found in Geobacillus thermodenitrificans (strain NG80-2).